The sequence spans 311 residues: tRNA-cytidine(32) 2-sulfurtransferase (311 aa).

The PP-loop motif signature appears at 47 to 52 (SGGKDS). Positions 122, 125, and 213 each coordinate [4Fe-4S] cluster.

It belongs to the TtcA family. In terms of assembly, homodimer. The cofactor is Mg(2+). [4Fe-4S] cluster is required as a cofactor.

It localises to the cytoplasm. It catalyses the reaction cytidine(32) in tRNA + S-sulfanyl-L-cysteinyl-[cysteine desulfurase] + AH2 + ATP = 2-thiocytidine(32) in tRNA + L-cysteinyl-[cysteine desulfurase] + A + AMP + diphosphate + H(+). It functions in the pathway tRNA modification. Its function is as follows. Catalyzes the ATP-dependent 2-thiolation of cytidine in position 32 of tRNA, to form 2-thiocytidine (s(2)C32). The sulfur atoms are provided by the cysteine/cysteine desulfurase (IscS) system. The chain is tRNA-cytidine(32) 2-sulfurtransferase from Shigella boydii serotype 4 (strain Sb227).